A 362-amino-acid chain; its full sequence is MTAAEKLTVAVVYGGQSTEHSVSCISAGAIIDNLDPERFTVVPVGITNGGAWVPGATDTAQLRASGRELPTVADHGEHIQPMLGAAGEATEFRFVTGDRAGDVFATADVIFPVLHGANGEDGTIQGLFDLLGARYVGNGVLASAAGMDKEFTKKIAREAGIPTGPEVVLHGRTELTDHERELLGLPVFVKPARGGSSIGISKVDSWRDLPAAIEEAASHDPKVIIEAMITGPEVECGVLEREDGTLVASSPAMLEGTDAGEEGFYGFDAKYLDDTVSATIPAPLDEETTRRVQQLAIETYRALGCTGLARVDFFVTDAGPVLNEINTMPGFTPISMYPQMFLADGVSYADLLTTLVSGARRH.

Residues 153–357 enclose the ATP-grasp domain; it reads KKIAREAGIP…YADLLTTLVS (205 aa). 180–235 is an ATP binding site; sequence RELLGLPVFVKPARGGSSIGISKVDSWRDLPAAIEEAASHDPKVIIEAMITGPEVE. Mg(2+) contacts are provided by Asp-312, Glu-324, and Asn-326.

Belongs to the D-alanine--D-alanine ligase family. Requires Mg(2+) as cofactor. Mn(2+) serves as cofactor.

The protein resides in the cytoplasm. It carries out the reaction 2 D-alanine + ATP = D-alanyl-D-alanine + ADP + phosphate + H(+). Its pathway is cell wall biogenesis; peptidoglycan biosynthesis. In terms of biological role, cell wall formation. The polypeptide is D-alanine--D-alanine ligase (Corynebacterium urealyticum (strain ATCC 43042 / DSM 7109)).